The following is a 339-amino-acid chain: Transcription initiation factor IIB (339 aa).

Residues Glu39–Gln70 form a TFIIB-type zinc finger. Residues Cys43, Cys46, Cys62, and Cys65 each coordinate Zn(2+). Repeat copies occupy residues Ser156–Leu239 and Asp250–Glu331.

Belongs to the TFIIB family.

Functionally, stabilizes TBP binding to an archaeal box-A promoter. Also responsible for recruiting RNA polymerase II to the pre-initiation complex (DNA-TBP-TFIIB). This is Transcription initiation factor IIB from Methanococcus maripaludis (strain C6 / ATCC BAA-1332).